A 422-amino-acid chain; its full sequence is 3-phosphoshikimate 1-carboxyvinyltransferase (422 aa).

3 residues coordinate 3-phosphoshikimate: Lys20, Ser21, and Arg25. Lys20 is a phosphoenolpyruvate binding site. 2 residues coordinate phosphoenolpyruvate: Gly90 and Arg118. 3-phosphoshikimate is bound by residues Ser161, Ser162, Gln163, Ser189, Asp305, and Lys332. Phosphoenolpyruvate is bound at residue Gln163. Asp305 (proton acceptor) is an active-site residue. Phosphoenolpyruvate-binding residues include Arg336 and Arg378.

The protein belongs to the EPSP synthase family. Monomer.

It is found in the cytoplasm. The catalysed reaction is 3-phosphoshikimate + phosphoenolpyruvate = 5-O-(1-carboxyvinyl)-3-phosphoshikimate + phosphate. Its pathway is metabolic intermediate biosynthesis; chorismate biosynthesis. Functionally, catalyzes the transfer of the enolpyruvyl moiety of phosphoenolpyruvate (PEP) to the 5-hydroxyl of shikimate-3-phosphate (S3P) to produce enolpyruvyl shikimate-3-phosphate and inorganic phosphate. This chain is 3-phosphoshikimate 1-carboxyvinyltransferase, found in Nitrosopumilus maritimus (strain SCM1).